A 196-amino-acid chain; its full sequence is V-type proton ATPase subunit E (196 aa).

The protein belongs to the V-ATPase E subunit family.

Produces ATP from ADP in the presence of a proton gradient across the membrane. The polypeptide is V-type proton ATPase subunit E (Clostridium botulinum (strain Alaska E43 / Type E3)).